A 91-amino-acid chain; its full sequence is DNA-binding protein HU (91 aa).

The protein belongs to the bacterial histone-like protein family.

Histone-like DNA-binding protein which is capable of wrapping DNA to stabilize it, and thus to prevent its denaturation under extreme environmental conditions. Also seems to act as a fortuitous virulence factor in delayed sequelae by binding to heparan sulfate-proteoglycans in the extracellular matrix of target organs and acting as a nidus for in situ immune complex formation. This chain is DNA-binding protein HU (hup), found in Streptococcus pyogenes serotype M1.